The following is a 444-amino-acid chain: Maintenance of mitochondrial morphology protein 1 (444 aa).

Over 1–110 the chain is Lumenal; sequence MNNLDNLAGN…SFSGWSFIEG (110 aa). The helical transmembrane segment at 111–131 threads the bilayer; sequence FIIGQFSVIIVLIFFIKFFVF. The Cytoplasmic portion of the chain corresponds to 132 to 444; that stretch reads SDGSSSNSSN…TDDVPLSKAE (313 aa). Residues 207-419 form the SMP-LTD domain; that stretch reads PSESLDWFNV…EPRFQCIRLP (213 aa).

This sequence belongs to the MMM1 family. Homodimer. Component of the ER-mitochondria encounter structure (ERMES) or MDM complex, composed of MMM1, MDM10, MDM12 and MDM34. An MMM1 homodimer associates with one molecule of MDM12 on each side in a pairwise head-to-tail manner, and the SMP-LTD domains of MMM1 and MDM12 generate a continuous hydrophobic tunnel for phospholipid trafficking.

The protein resides in the endoplasmic reticulum membrane. In terms of biological role, component of the ERMES/MDM complex, which serves as a molecular tether to connect the endoplasmic reticulum (ER) and mitochondria. Components of this complex are involved in the control of mitochondrial shape and protein biogenesis, and function in nonvesicular lipid trafficking between the ER and mitochondria. The MDM12-MMM1 subcomplex functions in the major beta-barrel assembly pathway that is responsible for biogenesis of all outer membrane beta-barrel proteins, and acts in a late step after the SAM complex. The MDM10-MDM12-MMM1 subcomplex further acts in the TOM40-specific pathway after the action of the MDM12-MMM1 complex. Essential for establishing and maintaining the structure of mitochondria and maintenance of mtDNA nucleoids. This Vanderwaltozyma polyspora (strain ATCC 22028 / DSM 70294 / BCRC 21397 / CBS 2163 / NBRC 10782 / NRRL Y-8283 / UCD 57-17) (Kluyveromyces polysporus) protein is Maintenance of mitochondrial morphology protein 1.